We begin with the raw amino-acid sequence, 397 residues long: Metal tolerance protein 4 (397 aa).

Residues 1–19 (MEAKGENDARAPLLAERRR) are compositionally biased toward basic and acidic residues. A disordered region spans residues 1–27 (MEAKGENDARAPLLAERRRNSVGSMRG). Over 1 to 104 (MEAKGENDAR…EQKQSEFAMK (104 aa)) the chain is Cytoplasmic. Residues 105–122 (ISNYANMILLALKIYATI) form a helical membrane-spanning segment. Residues 123 to 126 (KSGS) lie on the Vacuolar side of the membrane. A helical transmembrane segment spans residues 127-147 (IAIAASTLDSLLDLMAGGILW). Residues 148 to 170 (FTHLSMKSINVYKYPIGKLRVQP) are Cytoplasmic-facing. The chain crosses the membrane as a helical span at residues 171-191 (VGIIIFAAVMATLGFQVFVQA). The Vacuolar segment spans residues 192–208 (VEKLIVNETPDKLTPVQ). The helical transmembrane segment at 209–229 (LTWLYSIMIFATVVKLALWLY) threads the bilayer. Residues 230–248 (CRTSGNKIVRAYAKDHYFD) lie on the Cytoplasmic side of the membrane. The chain crosses the membrane as a helical span at residues 249-269 (VVTNVVGLAAAVLGDMFYWWI). Residue D270 is a topological domain, vacuolar. A helical membrane pass occupies residues 271 to 291 (PVGAIALAVYTITNWSGTVWE). Over 292 to 397 (NAVSLVGESA…ILSKLPSSQP (106 aa)) the chain is Cytoplasmic.

Belongs to the cation diffusion facilitator (CDF) transporter (TC 2.A.4) family. SLC30A subfamily.

It is found in the vacuole membrane. In terms of biological role, involved in sequestration of excess metal in the cytoplasm into vacuoles to maintain metal homeostasis. The sequence is that of Metal tolerance protein 4 (MTP4) from Oryza sativa subsp. japonica (Rice).